Consider the following 429-residue polypeptide: Serine--tRNA ligase (429 aa).

235–237 (TAE) contributes to the L-serine binding site. 266 to 268 (RSE) is an ATP binding site. L-serine is bound at residue Glu-289. Position 353 to 356 (353 to 356 (EISS)) interacts with ATP. An L-serine-binding site is contributed by Ser-389.

Belongs to the class-II aminoacyl-tRNA synthetase family. Type-1 seryl-tRNA synthetase subfamily. As to quaternary structure, homodimer. The tRNA molecule binds across the dimer.

Its subcellular location is the cytoplasm. The catalysed reaction is tRNA(Ser) + L-serine + ATP = L-seryl-tRNA(Ser) + AMP + diphosphate + H(+). It carries out the reaction tRNA(Sec) + L-serine + ATP = L-seryl-tRNA(Sec) + AMP + diphosphate + H(+). The protein operates within aminoacyl-tRNA biosynthesis; selenocysteinyl-tRNA(Sec) biosynthesis; L-seryl-tRNA(Sec) from L-serine and tRNA(Sec): step 1/1. Catalyzes the attachment of serine to tRNA(Ser). Is also able to aminoacylate tRNA(Sec) with serine, to form the misacylated tRNA L-seryl-tRNA(Sec), which will be further converted into selenocysteinyl-tRNA(Sec). This is Serine--tRNA ligase from Haemophilus influenzae (strain 86-028NP).